The following is a 140-amino-acid chain: Ribosome-binding factor A (140 aa).

The interval 116-140 (RERQERGEIPPGSDDAQNCHDDEPS) is disordered.

The protein belongs to the RbfA family. In terms of assembly, monomer. Binds 30S ribosomal subunits, but not 50S ribosomal subunits or 70S ribosomes.

It localises to the cytoplasm. Functionally, one of several proteins that assist in the late maturation steps of the functional core of the 30S ribosomal subunit. Associates with free 30S ribosomal subunits (but not with 30S subunits that are part of 70S ribosomes or polysomes). Required for efficient processing of 16S rRNA. May interact with the 5'-terminal helix region of 16S rRNA. The polypeptide is Ribosome-binding factor A (Synechococcus sp. (strain WH7803)).